Reading from the N-terminus, the 269-residue chain is tRNA pseudouridine synthase A (269 aa).

The Nucleophile role is filled by D52. Y110 contributes to the substrate binding site.

Belongs to the tRNA pseudouridine synthase TruA family. Homodimer.

It carries out the reaction uridine(38/39/40) in tRNA = pseudouridine(38/39/40) in tRNA. Functionally, formation of pseudouridine at positions 38, 39 and 40 in the anticodon stem and loop of transfer RNAs. The chain is tRNA pseudouridine synthase A from Bacteroides thetaiotaomicron (strain ATCC 29148 / DSM 2079 / JCM 5827 / CCUG 10774 / NCTC 10582 / VPI-5482 / E50).